The primary structure comprises 360 residues: Photosystem II protein D1 2 (360 aa).

Topologically, residues 1 to 31 are cytoplasmic; that stretch reads MTTTLQQRESASLWEQFCQWVTSTNNRIYVG. A helical membrane pass occupies residues 32–53; sequence WFGTLMIPTLLTATTCFIIAFI. Over 54–110 the chain is Lumenal, thylakoid; sequence AAPPVDIDGIREPVAGSLLYGNNIISGAVVPSSNAIGLHFYPIWEAASLDEWLYNGG. Residues 111-134 form a helical membrane-spanning segment; sequence PYQLVVFHFLIGIFCYMGRQWELS. H118 is a chlorophyll a binding site. Y126 serves as a coordination point for pheophytin a. At 135–142 the chain is on the cytoplasmic side; sequence YRLGMRPW. A helical transmembrane segment spans residues 143–161; it reads ICVAYSAPVSAATAVFLIY. Y147 is a binding site for pheophytin a. At 162–191 the chain is on the lumenal, thylakoid side; the sequence is PIGQGSFSDGMPLGISGTFNFMIVFQAEHN. D170 and E189 together coordinate [CaMn4O5] cluster. The helical transmembrane segment at 192–218 threads the bilayer; sequence ILMHPFHMLGVAGVFGGSLFSAMHGSL. A chlorophyll a-binding site is contributed by H198. A quinone is bound by residues H215, S264, and F265. H215 provides a ligand contact to Fe cation. Residues 219 to 270 are Cytoplasmic-facing; the sequence is VTSSLVRETTEVESQNYGYKFGQEEETYNIVAAHGYFGRLIFQYASFNNSRS. Residues 271–295 form a helical membrane-spanning segment; sequence LHFFLGAWPVIGIWFTAMGVSTMAF. H272 lines the Fe cation pocket. The Lumenal, thylakoid segment spans residues 296–360; that stretch reads NLNGFNFNQS…VALTAPAVNG (65 aa). 5 residues coordinate [CaMn4O5] cluster: H332, E333, H337, D342, and A344. The propeptide occupies 345 to 360; the sequence is SGEQAPVALTAPAVNG.

The protein belongs to the reaction center PufL/M/PsbA/D family. PSII is composed of 1 copy each of membrane proteins PsbA, PsbB, PsbC, PsbD, PsbE, PsbF, PsbH, PsbI, PsbJ, PsbK, PsbL, PsbM, PsbT, PsbX, PsbY, PsbZ, Psb30/Ycf12, peripheral proteins PsbO, CyanoQ (PsbQ), PsbU, PsbV and a large number of cofactors. It forms dimeric complexes. The D1/D2 heterodimer binds P680, chlorophylls that are the primary electron donor of PSII, and subsequent electron acceptors. It shares a non-heme iron and each subunit binds pheophytin, quinone, additional chlorophylls, carotenoids and lipids. D1 provides most of the ligands for the Mn4-Ca-O5 cluster of the oxygen-evolving complex (OEC). There is also a Cl(-1) ion associated with D1 and D2, which is required for oxygen evolution. The PSII complex binds additional chlorophylls, carotenoids and specific lipids. is required as a cofactor. C-terminally processed by CtpA; processing is essential to allow assembly of the oxygen-evolving complex and photosynthetic growth. Post-translationally, tyr-161 forms a radical intermediate that is referred to as redox-active TyrZ, YZ or Y-Z.

The protein localises to the cellular thylakoid membrane. The enzyme catalyses 2 a plastoquinone + 4 hnu + 2 H2O = 2 a plastoquinol + O2. Functionally, photosystem II (PSII) is a light-driven water:plastoquinone oxidoreductase that uses light energy to abstract electrons from H(2)O, generating O(2) and a proton gradient subsequently used for ATP formation. It consists of a core antenna complex that captures photons, and an electron transfer chain that converts photonic excitation into a charge separation. The D1/D2 (PsbA/PsbD) reaction center heterodimer binds P680, the primary electron donor of PSII as well as several subsequent electron acceptors. This chain is Photosystem II protein D1 2, found in Synechocystis sp. (strain ATCC 27184 / PCC 6803 / Kazusa).